Reading from the N-terminus, the 452-residue chain is Mitochondrial import inner membrane translocase subunit TIM44 (452 aa).

At Thr128 the chain carries Phosphothreonine. Position 166 to 173 (166 to 173 (SGEKLGKT)) interacts with ATP. The residue at position 177 (Lys177) is an N6-succinyllysine. Ser180 carries the phosphoserine modification. At Lys217 the chain carries N6-succinyllysine.

This sequence belongs to the Tim44 family. In terms of assembly, probable component of the PAM complex at least composed of a mitochondrial HSP70 protein, GRPEL1 or GRPEL2, TIMM44, TIMM16/PAM16 and TIMM14/DNAJC19. The complex interacts with the TIMM23 component of the TIM23 complex. Interacts with SLC25A4/ANT1 and SLC25A5/ANT2; leading to inhibit the presequence translocase TIMM23, thereby promoting stabilization of PINK1.

The protein localises to the mitochondrion inner membrane. Functionally, essential component of the PAM complex, a complex required for the translocation of transit peptide-containing proteins from the inner membrane into the mitochondrial matrix in an ATP-dependent manner. Recruits mitochondrial HSP70 to drive protein translocation into the matrix using ATP as an energy source. In Mus musculus (Mouse), this protein is Mitochondrial import inner membrane translocase subunit TIM44 (Timm44).